We begin with the raw amino-acid sequence, 144 residues long: Fluoride-specific ion channel FluC (144 aa).

Transmembrane regions (helical) follow at residues leucine 7–alanine 27, phenylalanine 33–phenylalanine 53, leucine 71–threonine 91, and valine 105–alanine 125. Glycine 79 and threonine 82 together coordinate Na(+).

This sequence belongs to the fluoride channel Fluc/FEX (TC 1.A.43) family.

Its subcellular location is the cell inner membrane. The enzyme catalyses fluoride(in) = fluoride(out). Na(+) is not transported, but it plays an essential structural role and its presence is essential for fluoride channel function. Fluoride-specific ion channel. Important for reducing fluoride concentration in the cell, thus reducing its toxicity. The sequence is that of Fluoride-specific ion channel FluC from Gluconobacter oxydans (strain 621H) (Gluconobacter suboxydans).